Consider the following 225-residue polypeptide: 7-carboxy-7-deazaguanine synthase (225 aa).

Substrate contacts are provided by residues 12-14 (IQG) and arginine 27. Positions 18–225 (YIGVRQLFVR…PQVHKYLGVR (208 aa)) constitute a Radical SAM core domain. [4Fe-4S] cluster contacts are provided by cysteine 31, cysteine 35, and cysteine 38. Threonine 40 contacts Mg(2+). Threonine 80 lines the substrate pocket. Glycine 82 provides a ligand contact to S-adenosyl-L-methionine.

It belongs to the radical SAM superfamily. 7-carboxy-7-deazaguanine synthase family. In terms of assembly, homodimer. It depends on [4Fe-4S] cluster as a cofactor. Requires S-adenosyl-L-methionine as cofactor. The cofactor is Mg(2+).

The enzyme catalyses 6-carboxy-5,6,7,8-tetrahydropterin + H(+) = 7-carboxy-7-deazaguanine + NH4(+). It participates in purine metabolism; 7-cyano-7-deazaguanine biosynthesis. Its function is as follows. Catalyzes the complex heterocyclic radical-mediated conversion of 6-carboxy-5,6,7,8-tetrahydropterin (CPH4) to 7-carboxy-7-deazaguanine (CDG), a step common to the biosynthetic pathways of all 7-deazapurine-containing compounds. In Archaeoglobus fulgidus (strain ATCC 49558 / DSM 4304 / JCM 9628 / NBRC 100126 / VC-16), this protein is 7-carboxy-7-deazaguanine synthase.